Reading from the N-terminus, the 378-residue chain is Putative glutamate--cysteine ligase 2 (378 aa).

It belongs to the glutamate--cysteine ligase type 2 family. YbdK subfamily.

It carries out the reaction L-cysteine + L-glutamate + ATP = gamma-L-glutamyl-L-cysteine + ADP + phosphate + H(+). ATP-dependent carboxylate-amine ligase which exhibits weak glutamate--cysteine ligase activity. The protein is Putative glutamate--cysteine ligase 2 of Salinispora tropica (strain ATCC BAA-916 / DSM 44818 / JCM 13857 / NBRC 105044 / CNB-440).